The sequence spans 567 residues: MEGSPIPVLTVPTAPYEDQRPAGGGGLRRPTGLFEGQRNYLPNFIQSVLSSIDLRDRQGCTMVVGSDGRYFSRTAIEIVVQMAAANGIGRLIIGQNGILSTPAVSCIIRKIKAAGGIILTASHCPGGPGGEFGVKFNVANGGPAPDVVSDKIYQISKTIEEYAICPDLRIDLSRLGRQEFDLENKFKPFRVEIVDPVDIYLNLLRTIFDFHAIKGLLTGPSQLKIRIDAMHGVMGPYVRKVLCDELGAPANSAINCVPLEDFGGQHPDPNLTYATTLLEAMKGGEYGFGAAFDADGDRYMILGQNGFFVSPSDSLAIIAANLSCIPYFRQMGVRGFGRSMPTSMALDRVAKSMKVPVYETPAGWRFFSNLMDSGRCNLCGEESFGTGSDHLREKDGLWAVLVWLSIIAARKQSVEEIVRDHWAKFGRHYYCRFDYEGLDPKTTYYIMRDLEALVTDKSFIGQQFAVGSHVYSVAKTDSFEYVDPVDGTVTKKQGLRIIFSDASRLIFRLSSSSGVRATLRLYAESYERDPSGHDQEPQAVLSPLIAIALKISQIHERTGRRGPTVIT.

A disordered region spans residues 1-26 (MEGSPIPVLTVPTAPYEDQRPAGGGG). The residue at position 120 (Thr-120) is a Phosphothreonine. Ser-122 is modified (phosphoserine).

This sequence belongs to the phosphohexose mutase family. As to quaternary structure, interacts with DMD/dystrophin; the interaction is direct. Interacts with UTRN/utrophin. In terms of tissue distribution, detected in smooth and cardiac muscle at high levels and in skeletal muscle at low level. Present in other tissues due to vascular or other smooth muscle component. Low levels are present in liver, kidney, skin and brain (at protein level).

It localises to the cell junction. The protein resides in the adherens junction. It is found in the cytoplasm. The protein localises to the cytoskeleton. Its subcellular location is the cell membrane. It localises to the sarcolemma. Functionally, component of adherens-type cell-cell and cell-matrix junctions. Has no phosphoglucomutase activity in vitro. This chain is Phosphoglucomutase-like protein 5, found in Homo sapiens (Human).